The following is a 195-amino-acid chain: Guanylate kinase (195 aa).

Residues glycine 5–isoleucine 183 enclose the Guanylate kinase-like domain. Glycine 12–glycine 19 contacts ATP.

Belongs to the guanylate kinase family.

It is found in the cytoplasm. It catalyses the reaction GMP + ATP = GDP + ADP. Essential for recycling GMP and indirectly, cGMP. The polypeptide is Guanylate kinase (Syntrophomonas wolfei subsp. wolfei (strain DSM 2245B / Goettingen)).